The following is a 428-amino-acid chain: 3-phosphoshikimate 1-carboxyvinyltransferase (428 aa).

The 3-phosphoshikimate site is built by lysine 21, serine 22, and arginine 26. A phosphoenolpyruvate-binding site is contributed by lysine 21. Positions 91 and 119 each coordinate phosphoenolpyruvate. 3-phosphoshikimate-binding residues include serine 164, glutamine 166, aspartate 313, and lysine 340. Position 166 (glutamine 166) interacts with phosphoenolpyruvate. Aspartate 313 acts as the Proton acceptor in catalysis. Arginine 344 and arginine 386 together coordinate phosphoenolpyruvate.

It belongs to the EPSP synthase family. In terms of assembly, monomer.

The protein localises to the cytoplasm. The enzyme catalyses 3-phosphoshikimate + phosphoenolpyruvate = 5-O-(1-carboxyvinyl)-3-phosphoshikimate + phosphate. Its pathway is metabolic intermediate biosynthesis; chorismate biosynthesis; chorismate from D-erythrose 4-phosphate and phosphoenolpyruvate: step 6/7. In terms of biological role, catalyzes the transfer of the enolpyruvyl moiety of phosphoenolpyruvate (PEP) to the 5-hydroxyl of shikimate-3-phosphate (S3P) to produce enolpyruvyl shikimate-3-phosphate and inorganic phosphate. In Campylobacter jejuni subsp. jejuni serotype O:23/36 (strain 81-176), this protein is 3-phosphoshikimate 1-carboxyvinyltransferase.